A 375-amino-acid polypeptide reads, in one-letter code: Queuine tRNA-ribosyltransferase (375 aa).

The Proton acceptor role is filled by Asp90. Substrate-binding positions include Asp90 to Phe94, Asp144, Gln193, and Gly220. Residues Gly251–Asp257 form an RNA binding region. Asp270 serves as the catalytic Nucleophile. The RNA binding; important for wobble base 34 recognition stretch occupies residues Thr275–Arg279. Zn(2+) contacts are provided by Cys308, Cys310, Cys313, and His339.

This sequence belongs to the queuine tRNA-ribosyltransferase family. As to quaternary structure, homodimer. Within each dimer, one monomer is responsible for RNA recognition and catalysis, while the other monomer binds to the replacement base PreQ1. Zn(2+) serves as cofactor.

It carries out the reaction 7-aminomethyl-7-carbaguanine + guanosine(34) in tRNA = 7-aminomethyl-7-carbaguanosine(34) in tRNA + guanine. Its pathway is tRNA modification; tRNA-queuosine biosynthesis. In terms of biological role, catalyzes the base-exchange of a guanine (G) residue with the queuine precursor 7-aminomethyl-7-deazaguanine (PreQ1) at position 34 (anticodon wobble position) in tRNAs with GU(N) anticodons (tRNA-Asp, -Asn, -His and -Tyr). Catalysis occurs through a double-displacement mechanism. The nucleophile active site attacks the C1' of nucleotide 34 to detach the guanine base from the RNA, forming a covalent enzyme-RNA intermediate. The proton acceptor active site deprotonates the incoming PreQ1, allowing a nucleophilic attack on the C1' of the ribose to form the product. After dissociation, two additional enzymatic reactions on the tRNA convert PreQ1 to queuine (Q), resulting in the hypermodified nucleoside queuosine (7-(((4,5-cis-dihydroxy-2-cyclopenten-1-yl)amino)methyl)-7-deazaguanosine). This is Queuine tRNA-ribosyltransferase from Methylibium petroleiphilum (strain ATCC BAA-1232 / LMG 22953 / PM1).